Reading from the N-terminus, the 124-residue chain is Small ribosomal subunit protein uS12 (124 aa).

Aspartate 89 carries the 3-methylthioaspartic acid modification.

This sequence belongs to the universal ribosomal protein uS12 family. As to quaternary structure, part of the 30S ribosomal subunit. Contacts proteins S8 and S17. May interact with IF1 in the 30S initiation complex.

With S4 and S5 plays an important role in translational accuracy. Its function is as follows. Interacts with and stabilizes bases of the 16S rRNA that are involved in tRNA selection in the A site and with the mRNA backbone. Located at the interface of the 30S and 50S subunits, it traverses the body of the 30S subunit contacting proteins on the other side and probably holding the rRNA structure together. The combined cluster of proteins S8, S12 and S17 appears to hold together the shoulder and platform of the 30S subunit. The protein is Small ribosomal subunit protein uS12 of Psychrobacter sp. (strain PRwf-1).